Reading from the N-terminus, the 396-residue chain is Tryptophan synthase beta chain (396 aa).

At K88 the chain carries N6-(pyridoxal phosphate)lysine.

The protein belongs to the TrpB family. As to quaternary structure, tetramer of two alpha and two beta chains. Pyridoxal 5'-phosphate is required as a cofactor.

The enzyme catalyses (1S,2R)-1-C-(indol-3-yl)glycerol 3-phosphate + L-serine = D-glyceraldehyde 3-phosphate + L-tryptophan + H2O. It functions in the pathway amino-acid biosynthesis; L-tryptophan biosynthesis; L-tryptophan from chorismate: step 5/5. Functionally, the beta subunit is responsible for the synthesis of L-tryptophan from indole and L-serine. In Shewanella putrefaciens (strain CN-32 / ATCC BAA-453), this protein is Tryptophan synthase beta chain.